A 978-amino-acid chain; its full sequence is Alanine--tRNA ligase, chloroplastic/mitochondrial (978 aa).

Positions 655, 659, 758, and 762 each coordinate Zn(2+). Lys-773 is covalently cross-linked (Glycyl lysine isopeptide (Lys-Gly) (interchain with G-Cter in ubiquitin)).

Belongs to the class-II aminoacyl-tRNA synthetase family. Monomer. It depends on Zn(2+) as a cofactor.

The protein localises to the plastid. The protein resides in the chloroplast. Its subcellular location is the mitochondrion. The catalysed reaction is tRNA(Ala) + L-alanine + ATP = L-alanyl-tRNA(Ala) + AMP + diphosphate. Its function is as follows. Catalyzes the attachment of alanine to tRNA(Ala) in a two-step reaction: alanine is first activated by ATP to form Ala-AMP and then transferred to the acceptor end of tRNA(Ala). Also edits incorrectly charged tRNA(Ala) via its editing domain. The polypeptide is Alanine--tRNA ligase, chloroplastic/mitochondrial (EMB86) (Arabidopsis thaliana (Mouse-ear cress)).